Here is an 894-residue protein sequence, read N- to C-terminus: RNA polymerase I-specific transcription initiation factor RRN6 (894 aa).

The segment at P803–G894 is disordered. Polar residues-rich tracts occupy residues N806–G823, K832–S849, and Q863–S880. Positions Q881–G894 are enriched in basic residues.

As to quaternary structure, component of the core factor (CF) complex, which consists of RRN6, RRN7 and RRN11. The CF heterotrimer may further dimerize to form a hexamer. RRN6 interacts with RRN7, RRN11 and RRN9.

The protein resides in the cytoplasm. It is found in the nucleus. It localises to the nucleolus. Functionally, acts as a component of the core factor (CF) complex which is essential for the initiation of rDNA transcription by RNA polymerase I. After binding of UAF (upstream activation factor) to an upstream element of the promoter, CF is recruited in a SPT15/TBP-dependent manner to form a preinitiation complex. The protein is RNA polymerase I-specific transcription initiation factor RRN6 (RRN6) of Saccharomyces cerevisiae (strain ATCC 204508 / S288c) (Baker's yeast).